A 152-amino-acid polypeptide reads, in one-letter code: MIKVKIVRLNQKAILPVYATAHAAGMDVSACLDAPVTVPSSASALIPTGFAIELPEGYEAQLRPRSGLALRHCISLPNSPATIDADYRGEVGVILINHGREPFTVSHGDRIAQMVVAKVDHVVFEEVESLSETARGEGGFGHTGVQAKAECL.

Substrate contacts are provided by residues 65–67 (RSG), asparagine 78, and 82–84 (TID).

It belongs to the dUTPase family. Requires Mg(2+) as cofactor.

The catalysed reaction is dUTP + H2O = dUMP + diphosphate + H(+). Its pathway is pyrimidine metabolism; dUMP biosynthesis; dUMP from dCTP (dUTP route): step 2/2. This enzyme is involved in nucleotide metabolism: it produces dUMP, the immediate precursor of thymidine nucleotides and it decreases the intracellular concentration of dUTP so that uracil cannot be incorporated into DNA. In Chlorobaculum tepidum (strain ATCC 49652 / DSM 12025 / NBRC 103806 / TLS) (Chlorobium tepidum), this protein is Deoxyuridine 5'-triphosphate nucleotidohydrolase.